Consider the following 349-residue polypeptide: Anthranilate phosphoribosyltransferase (349 aa).

5-phospho-alpha-D-ribose 1-diphosphate is bound by residues glycine 94, 97-98 (GD), threonine 102, 104-107 (NIST), 122-130 (KHGNRSVSS), and serine 134. Residue glycine 94 participates in anthranilate binding. Serine 106 lines the Mg(2+) pocket. An anthranilate-binding site is contributed by asparagine 125. Anthranilate is bound at residue arginine 180. 2 residues coordinate Mg(2+): aspartate 239 and glutamate 240.

This sequence belongs to the anthranilate phosphoribosyltransferase family. As to quaternary structure, homodimer. The cofactor is Mg(2+).

The enzyme catalyses N-(5-phospho-beta-D-ribosyl)anthranilate + diphosphate = 5-phospho-alpha-D-ribose 1-diphosphate + anthranilate. Its pathway is amino-acid biosynthesis; L-tryptophan biosynthesis; L-tryptophan from chorismate: step 2/5. Catalyzes the transfer of the phosphoribosyl group of 5-phosphorylribose-1-pyrophosphate (PRPP) to anthranilate to yield N-(5'-phosphoribosyl)-anthranilate (PRA). The chain is Anthranilate phosphoribosyltransferase from Trichlorobacter lovleyi (strain ATCC BAA-1151 / DSM 17278 / SZ) (Geobacter lovleyi).